A 326-amino-acid chain; its full sequence is MASLRELRTRIKSVNSTKKITKAQELIATSRITKAQARVDDAEPYADEITRVVQRLAAASTLDHKILQEPTDASRAAILVVSSDRGMCGGYNNNVFKKTAELRKRLENEGKDVVLYVSGNKGISYYNFRGEDIAGAWSGYSQDPDYAATHDVRRHLIDGFVAGSEGTAKWREGLKAEEGQAVQGFDEVHIVYTRFESMLSQKPEAHRLLPIETVVEEEKFELGEDLVSDKVDHIAADYDFEPDPDTLLKALLPQYVSRGIFAAMLESAASESAARRTAMSAATDNATDLVKQLSRVANQARQAQITQEITEIVGGASALADSGESD.

Belongs to the ATPase gamma chain family. As to quaternary structure, F-type ATPases have 2 components, CF(1) - the catalytic core - and CF(0) - the membrane proton channel. CF(1) has five subunits: alpha(3), beta(3), gamma(1), delta(1), epsilon(1). CF(0) has three main subunits: a, b and c.

Its subcellular location is the cell membrane. Its function is as follows. Produces ATP from ADP in the presence of a proton gradient across the membrane. The gamma chain is believed to be important in regulating ATPase activity and the flow of protons through the CF(0) complex. This chain is ATP synthase gamma chain, found in Corynebacterium jeikeium (strain K411).